The following is a 150-amino-acid chain: Transcriptional repressor NrdR (150 aa).

The segment at 3–34 (CPFCAFADSKVVDSRPDKGGSTIRRRRECESC) is a zinc-finger region. The 91-residue stretch at 49-139 (PLVIKKDGRR…VYRSFKDITE (91 aa)) folds into the ATP-cone domain.

It belongs to the NrdR family. The cofactor is Zn(2+).

Its function is as follows. Negatively regulates transcription of bacterial ribonucleotide reductase nrd genes and operons by binding to NrdR-boxes. This is Transcriptional repressor NrdR from Geotalea uraniireducens (strain Rf4) (Geobacter uraniireducens).